Here is a 330-residue protein sequence, read N- to C-terminus: ADP-L-glycero-D-manno-heptose-6-epimerase (330 aa).

NADP(+)-binding positions include 11 to 12 (FI), 32 to 33 (DN), Lys-39, Lys-54, 75 to 79 (EGACS), and Asn-92. Tyr-139 functions as the Proton acceptor in the catalytic mechanism. Residue Lys-143 coordinates NADP(+). A substrate-binding site is contributed by Asn-168. NADP(+) contacts are provided by Val-169 and Lys-177. The active-site Proton acceptor is Lys-177. Substrate contacts are provided by residues Arg-179, His-186, 200 to 203 (FGEY), Arg-213, and Tyr-292.

This sequence belongs to the NAD(P)-dependent epimerase/dehydratase family. HldD subfamily. As to quaternary structure, homopentamer. It depends on NADP(+) as a cofactor.

It carries out the reaction ADP-D-glycero-beta-D-manno-heptose = ADP-L-glycero-beta-D-manno-heptose. It participates in nucleotide-sugar biosynthesis; ADP-L-glycero-beta-D-manno-heptose biosynthesis; ADP-L-glycero-beta-D-manno-heptose from D-glycero-beta-D-manno-heptose 7-phosphate: step 4/4. Its function is as follows. Catalyzes the interconversion between ADP-D-glycero-beta-D-manno-heptose and ADP-L-glycero-beta-D-manno-heptose via an epimerization at carbon 6 of the heptose. This Burkholderia pseudomallei (strain K96243) protein is ADP-L-glycero-D-manno-heptose-6-epimerase.